Reading from the N-terminus, the 349-residue chain is Putative transport protein YhhT (349 aa).

The Cytoplasmic portion of the chain corresponds to 1–10 (METPQPDKTG). The chain crosses the membrane as a helical span at residues 11–31 (MHILLKLASLVVILAGIHAAA). A topological domain (periplasmic) is located at residue D32. The chain crosses the membrane as a helical span at residues 33–53 (IIVQLLLALFFAIVLNPLVTW). At 54-62 (FIRRGVQRP) the chain is on the cytoplasmic side. Residues 63–83 (VAITIVVVVMLIALTALVGVL) form a helical membrane-spanning segment. Over 84–142 (AASFNEFISMLPKFNKELTRKLFKLQEMLPFLNLHMSPERMLQRMDSEKVVTFTTALMT) the chain is Periplasmic. Residues 143–163 (GLSGAMASVLLLVMTVVFMLF) traverse the membrane as a helical segment. Residues 164 to 208 (EVRHVPYKMRFALNNPQIHIAGLHRALKGVSHYLALKTLLSLWTG) lie on the Cytoplasmic side of the membrane. Residues 209-229 (VIVWLGLELMGVQFALMWAVL) traverse the membrane as a helical segment. At 230–234 (AFLLN) the chain is on the periplasmic side. The chain crosses the membrane as a helical span at residues 235 to 255 (YVPNIGAVISAVPPMIQVLLF). The Cytoplasmic portion of the chain corresponds to 256-257 (NG). A helical transmembrane segment spans residues 258–278 (VYECILVGALFLVVHMVIGNI). Residues 279 to 292 (LEPRMMGHRLGMST) are Periplasmic-facing. Residues 293–313 (MVVFLSLLIWGWLLGPVGMLL) traverse the membrane as a helical segment. Topologically, residues 314 to 349 (SVPLTSVCKIWMETTKGGSKLAILLGPGRPKSRLPG) are cytoplasmic.

It belongs to the autoinducer-2 exporter (AI-2E) (TC 2.A.86) family.

The protein resides in the cell inner membrane. The chain is Putative transport protein YhhT (yhhT) from Escherichia coli O157:H7.